A 751-amino-acid chain; its full sequence is uncharacterized protein (751 aa).

The disordered stretch occupies residues 73–169 (FGVVHSHTPK…PVLIDDDTGE (97 aa)). Residues 96 to 109 (ATSTRRSATAQRAA) are compositionally biased toward low complexity. Polar residues predominate over residues 111–120 (LKSSPVDQWS).

This is an uncharacterized protein from Invertebrate iridescent virus 3 (IIV-3).